The chain runs to 91 residues: Small ribosomal subunit protein uS17 (91 aa).

Belongs to the universal ribosomal protein uS17 family. As to quaternary structure, part of the 30S ribosomal subunit.

Functionally, one of the primary rRNA binding proteins, it binds specifically to the 5'-end of 16S ribosomal RNA. The chain is Small ribosomal subunit protein uS17 from Saccharopolyspora erythraea (strain ATCC 11635 / DSM 40517 / JCM 4748 / NBRC 13426 / NCIMB 8594 / NRRL 2338).